A 271-amino-acid polypeptide reads, in one-letter code: Neurexophilin-1 (271 aa).

An N-terminal signal peptide occupies residues 1 to 21 (MQAACWYVLLLLQPTVYLVTC). The segment at 22–97 (ANLTNGGKSE…WDWLRNSTDL (76 aa)) is II. 6 N-linked (GlcNAc...) asparagine glycosylation sites follow: asparagine 23, asparagine 68, asparagine 93, asparagine 146, asparagine 156, and asparagine 162. The tract at residues 98 to 176 (QEPRPRAKRR…LVPPTKIVEF (79 aa)) is III. Residues 177 to 185 (DLAQQTVID) are IV (linker domain). The v (Cys-rich) stretch occupies residues 186 to 271 (AKDSKSFNCR…HSDTPYFPSG (86 aa)).

The protein belongs to the neurexophilin family. Post-translationally, may be proteolytically processed at the boundary between the N-terminal non-conserved and the central conserved domain in neuron-like cells. In terms of tissue distribution, brain, only in a scattered subpopulation of neurons that probably represent inhibitory interneurons.

Its subcellular location is the secreted. May be signaling molecules that resemble neuropeptides. Ligand for alpha-neurexins. The chain is Neurexophilin-1 (Nxph1) from Mus musculus (Mouse).